A 174-amino-acid polypeptide reads, in one-letter code: UPF0316 protein Dhaf_3052 (174 aa).

Helical transmembrane passes span 4 to 24, 35 to 55, and 59 to 79; these read ILQF…LTTI, VYAS…LSII, and LDSY…VYLG.

Belongs to the UPF0316 family.

The protein localises to the cell membrane. The protein is UPF0316 protein Dhaf_3052 of Desulfitobacterium hafniense (strain DSM 10664 / DCB-2).